The following is a 60-amino-acid chain: Cytotoxin 5 (60 aa).

Disulfide bonds link cysteine 3-cysteine 21, cysteine 14-cysteine 38, cysteine 42-cysteine 53, and cysteine 54-cysteine 59.

It belongs to the three-finger toxin family. Short-chain subfamily. Type IA cytotoxin sub-subfamily. As to quaternary structure, monomer in solution; Homodimer and oligomer in the presence of negatively charged lipids forming a pore with a size ranging between 20 and 30 Angstroms. Expressed by the venom gland.

It localises to the secreted. The protein localises to the target cell membrane. Its function is as follows. Shows cytolytic activity on many different cells by forming pore in lipid membranes. In vivo, increases heart rate or kills the animal by cardiac arrest. In addition, it binds to heparin with high affinity, interacts with Kv channel-interacting protein 1 (KCNIP1) in a calcium-independent manner, and binds to integrin alpha-V/beta-3 (ITGAV/ITGB3) with moderate affinity. In Naja haje haje (Egyptian cobra), this protein is Cytotoxin 5.